Here is a 188-residue protein sequence, read N- to C-terminus: Adenine phosphoribosyltransferase (188 aa).

It belongs to the purine/pyrimidine phosphoribosyltransferase family. In terms of assembly, homodimer.

The protein localises to the cytoplasm. It catalyses the reaction AMP + diphosphate = 5-phospho-alpha-D-ribose 1-diphosphate + adenine. It participates in purine metabolism; AMP biosynthesis via salvage pathway; AMP from adenine: step 1/1. In terms of biological role, catalyzes a salvage reaction resulting in the formation of AMP, that is energically less costly than de novo synthesis. This Burkholderia thailandensis (strain ATCC 700388 / DSM 13276 / CCUG 48851 / CIP 106301 / E264) protein is Adenine phosphoribosyltransferase.